The primary structure comprises 54 residues: U7-myrmicitoxin-Tb1a (54 aa).

Positions 1–26 (MQLSHLLLAFAMIFVMTIIHTPQVQA) are cleaved as a signal peptide. A propeptide spanning residues 27-36 (DAMADADADA) is cleaved from the precursor. A disulfide bond links cysteine 40 and cysteine 49.

In terms of tissue distribution, expressed by the venom gland.

It is found in the secreted. Its function is as follows. Venom protein with unknown function. Does not induce paralysis when a high dose is administered by intrathoracic injection into the blowfly Lucilia caesar. This chain is U7-myrmicitoxin-Tb1a, found in Tetramorium bicarinatum (Tramp ant).